The following is a 206-amino-acid chain: GTP cyclohydrolase 1 (206 aa).

Zn(2+)-binding residues include cysteine 95, histidine 98, and cysteine 166.

Belongs to the GTP cyclohydrolase I family. In terms of assembly, toroid-shaped homodecamer, composed of two pentamers of five dimers.

The catalysed reaction is GTP + H2O = 7,8-dihydroneopterin 3'-triphosphate + formate + H(+). Its pathway is cofactor biosynthesis; 7,8-dihydroneopterin triphosphate biosynthesis; 7,8-dihydroneopterin triphosphate from GTP: step 1/1. This is GTP cyclohydrolase 1 from Bartonella quintana (strain Toulouse) (Rochalimaea quintana).